Here is a 66-residue protein sequence, read N- to C-terminus: Large ribosomal subunit protein bL35c (66 aa).

This sequence belongs to the bacterial ribosomal protein bL35 family.

The protein localises to the plastid. It is found in the chloroplast. This is Large ribosomal subunit protein bL35c from Gracilaria tenuistipitata var. liui (Red alga).